A 339-amino-acid polypeptide reads, in one-letter code: Thermospermine synthase ACAULIS5 (339 aa).

The PABS domain occupies 33–270 (CHWYEETIDD…DTWGWVMASD (238 aa)). S-adenosyl 3-(methylsulfanyl)propylamine contacts are provided by residues Gln-62, Glu-117, Asp-137, and 168–169 (DA). Asp-186 (proton acceptor) is an active-site residue.

The protein belongs to the spermidine/spermine synthase family. In terms of tissue distribution, highly expressed in stem internodes and roots. Lower levels in young seedlings before flowering and rosette leaves. Expressed in the vascular tissues. Restricted to procambial and/or provascular cells during primary root development and early leaves development.

The enzyme catalyses S-adenosyl 3-(methylsulfanyl)propylamine + spermidine = thermospermine + S-methyl-5'-thioadenosine + H(+). Required for correct xylem specification through regulation of the lifetime of the xylem elements. Prevents premature death of the xylem vessel elements. The sequence is that of Thermospermine synthase ACAULIS5 (ACL5) from Arabidopsis thaliana (Mouse-ear cress).